Reading from the N-terminus, the 207-residue chain is BTB/POZ domain-containing protein At1g01640 (207 aa).

Residues 24 to 94 (TDVLVKPGEE…LYSGNLKAPY (71 aa)) form the BTB domain.

Interacts with CUL3A.

It functions in the pathway protein modification; protein ubiquitination. May act as a substrate-specific adapter of an E3 ubiquitin-protein ligase complex (CUL3-RBX1-BTB) which mediates the ubiquitination and subsequent proteasomal degradation of target proteins. In Arabidopsis thaliana (Mouse-ear cress), this protein is BTB/POZ domain-containing protein At1g01640.